A 425-amino-acid polypeptide reads, in one-letter code: Peroxisomal membrane protein PEX14 (425 aa).

Disordered stretches follow at residues 49–89 (RSQG…YRNA) and 247–425 (DEPI…AAQS). Over residues 56–76 (SSSVASQVSSYSPSASQSSVA) the composition is skewed to low complexity. The SH3-binding motif lies at 89–97 (APPLPERDW). The span at 256 to 297 (PSLTTGANSLTSESSGRSSIPHSQSVPIRTQLTTPPSDSDTS) shows a compositional bias: polar residues. 2 stretches are compositionally biased toward basic and acidic residues: residues 315 to 324 (DILRKEKNRT) and 333 to 366 (LGKD…PEED).

Belongs to the peroxin-14 family. Interacts with PEX13 (via SH3 domain); forming the PEX13-PEX14 docking complex. Interacts with PEX5 (via WxxxF/Y motifs). Interacts with PEX20 (via WxxxF/Y motifs). Interacts with PEX3, PEX7, PEX8 and PEX17. Post-translationally, phosphorylated on serine or threonine residues.

It localises to the peroxisome membrane. Its function is as follows. Component of the PEX13-PEX14 docking complex, a translocon channel that specifically mediates the import of peroxisomal cargo proteins bound to PEX5 or PEX20 receptors. The PEX13-PEX14 docking complex forms a large import pore which can be opened to a diameter of about 9 nm. Mechanistically, PEX5 (or PEX20) receptor along with cargo proteins associates with the PEX14 subunit of the PEX13-PEX14 docking complex in the cytosol, leading to the insertion of the receptor into the organelle membrane with the concomitant translocation of the cargo into the peroxisome matrix. In Komagataella pastoris (Yeast), this protein is Peroxisomal membrane protein PEX14.